The primary structure comprises 571 residues: Dehydrocurvularin exporter (571 aa).

Positions 1–34 (MADGSDLENNHKPELDRSQPGSTSNGSQEQKDPD) are disordered. Over residues 8–17 (ENNHKPELDR) the composition is skewed to basic and acidic residues. The span at 19-28 (QPGSTSNGSQ) shows a compositional bias: polar residues. Asn-25 is a glycosylation site (N-linked (GlcNAc...) asparagine). 14 helical membrane-spanning segments follow: residues 47-67 (ILVMFTIFVSTILVSLEIGII), 86-106 (WYGSATFILAAAASPLWGKLF), 120-140 (FIFLVGSIVAAAAPNSVSVII), 143-163 (AIQGWGASGVLGGTLIVINYV), 171-191 (LLIGTWMAVFMVSTILGPVIG), 202-222 (WCFWINLPVGGPIIVLLLLFL), 238-258 (IILALDLPGFCLLLVSLVCLT), 275-295 (VIATLVMWIVLSIAFLVTEWF), 317-337 (LFCLISYAALYQVMFYLPIYF), 350-370 (VNTLPFLAFFALGAVVSGGVI), 379-399 (FELLGALIMTAGMALIYILDV), 405-425 (MYIGAEVLFGFGVGICNQIPM), 443-463 (IMVMCQTLSGAYFVAIAQSLF), and 514-534 (VFAFSLACAAFAVLLSLIIPF). Positions 538-571 (PDHGKKDKPATEEAAEEKSEAEGKVSGDKEENHS) are disordered.

The protein belongs to the major facilitator superfamily. TCR/Tet family.

It is found in the cell membrane. Functionally, efflux pump that is probably involved in the export of dehydrocurvularin. This chain is Dehydrocurvularin exporter, found in Aspergillus terreus.